We begin with the raw amino-acid sequence, 132 residues long: UPF0251 protein PTH_0588 (132 aa).

This sequence belongs to the UPF0251 family.

This chain is UPF0251 protein PTH_0588, found in Pelotomaculum thermopropionicum (strain DSM 13744 / JCM 10971 / SI).